Consider the following 137-residue polypeptide: Ribosome-binding factor A (137 aa).

Belongs to the RbfA family. As to quaternary structure, monomer. Binds 30S ribosomal subunits, but not 50S ribosomal subunits or 70S ribosomes.

Its subcellular location is the cytoplasm. One of several proteins that assist in the late maturation steps of the functional core of the 30S ribosomal subunit. Associates with free 30S ribosomal subunits (but not with 30S subunits that are part of 70S ribosomes or polysomes). Required for efficient processing of 16S rRNA. May interact with the 5'-terminal helix region of 16S rRNA. This Allorhizobium ampelinum (strain ATCC BAA-846 / DSM 112012 / S4) (Agrobacterium vitis (strain S4)) protein is Ribosome-binding factor A.